Reading from the N-terminus, the 372-residue chain is Putative RING-H2 finger protein ATL21A (372 aa).

Residues 1–20 (MTFSKQLFLYLFFLFPLLHA) form the signal peptide. A helical transmembrane segment spans residues 242–262 (IILLSIIGPLTIFATCIAVGV). The segment at 320–362 (CPICLSEYASKETVRCIPECDHCFHSECIDVWLKIHGSCPLCR) adopts an RING-type; atypical zinc-finger fold.

This sequence belongs to the RING-type zinc finger family. ATL subfamily.

The protein localises to the membrane. The enzyme catalyses S-ubiquitinyl-[E2 ubiquitin-conjugating enzyme]-L-cysteine + [acceptor protein]-L-lysine = [E2 ubiquitin-conjugating enzyme]-L-cysteine + N(6)-ubiquitinyl-[acceptor protein]-L-lysine.. It participates in protein modification; protein ubiquitination. The protein is Putative RING-H2 finger protein ATL21A (ATL21A) of Arabidopsis thaliana (Mouse-ear cress).